A 306-amino-acid chain; its full sequence is MLHGMSPECALSKLLSSLEFHTLYRYTMTQKHNFPSNNKDTLHLPRILCLHGGGTNARIFRAQCRALEKALRTSFRLCYAEALFPSQPGPDVTAVYRDFGPFRAWIDSPDANPVTMTEALQISICKAIMEDDQRGATGPVVGLLGFSQGAKVCASLILEQQLLGRTFGDHSHLPFRLPQWRFAVLLAGRGPLVTLSHLSVGADIMQKMAHLCENDDSSGLDSQENLGNVILTRELIQVPTIHVHGRKDPALDLHRKLYYDDFDPRYSKVMEWDGAHRVPLKSKDVATLVKEINVLWASVSHSNVQG.

Active-site charge relay system residues include S147, D248, and H276.

It belongs to the LovG family.

The protein operates within secondary metabolite biosynthesis. In terms of biological role, esterase; part of the gene cluster that mediates the biosynthesis of the tropolone class of fungal maleic anhydrides. The pathway begins with the synthesis of 3-methylorcinaldehyde by the non-reducing polyketide synthase (PKS) tropA. 3-methylorcinaldehyde is the substrate for the FAD-dependent monooxygenase tropB to yield a dearomatized hydroxycyclohexadione. The 2-oxoglutarate-dependent dioxygenase tropC then performs the oxidative ring expansion to provide the first tropolone metabolite stipitaldehyde. Trop D converts stipitaldehyde into stipitacetal which is in turn converted to stipitalide by the short-chain dehydrogenase/reductase tropE. The next steps involve tropF, tropG, tropH, tropI and tropJ to form successive tropolone maleic anhydrides including stipitaldehydic, stipitatonic and stipitatic acids. This Talaromyces stipitatus (strain ATCC 10500 / CBS 375.48 / QM 6759 / NRRL 1006) (Penicillium stipitatum) protein is Esterase tropF.